The sequence spans 93 residues: UPF0250 protein PSPA7_1111 (93 aa).

The protein belongs to the UPF0250 family.

This chain is UPF0250 protein PSPA7_1111, found in Pseudomonas paraeruginosa (strain DSM 24068 / PA7) (Pseudomonas aeruginosa (strain PA7)).